Reading from the N-terminus, the 344-residue chain is 4-hydroxy-2-oxovalerate aldolase (344 aa).

A Pyruvate carboxyltransferase domain is found at Val-8 to Met-260. Arg-16–Asp-17 is a substrate binding site. Asp-17 lines the Mn(2+) pocket. The active-site Proton acceptor is His-20. Substrate is bound by residues Ser-170 and His-199. Positions 199 and 201 each coordinate Mn(2+). Tyr-290 contacts substrate.

This sequence belongs to the 4-hydroxy-2-oxovalerate aldolase family.

The catalysed reaction is (S)-4-hydroxy-2-oxopentanoate = acetaldehyde + pyruvate. In Pseudoalteromonas translucida (strain TAC 125), this protein is 4-hydroxy-2-oxovalerate aldolase (mhpE).